The primary structure comprises 252 residues: 3-dehydroquinate dehydratase (252 aa).

Residues Ser-21, 46-48 (EWR), and Arg-82 each bind 3-dehydroquinate. His-143 acts as the Proton donor/acceptor in catalysis. Lys-170 functions as the Schiff-base intermediate with substrate in the catalytic mechanism. The 3-dehydroquinate site is built by Arg-213, Ser-232, and Gln-236.

This sequence belongs to the type-I 3-dehydroquinase family. Homodimer.

The catalysed reaction is 3-dehydroquinate = 3-dehydroshikimate + H2O. The protein operates within metabolic intermediate biosynthesis; chorismate biosynthesis; chorismate from D-erythrose 4-phosphate and phosphoenolpyruvate: step 3/7. Its function is as follows. Involved in the third step of the chorismate pathway, which leads to the biosynthesis of aromatic amino acids. Catalyzes the cis-dehydration of 3-dehydroquinate (DHQ) and introduces the first double bond of the aromatic ring to yield 3-dehydroshikimate. The protein is 3-dehydroquinate dehydratase of Salmonella agona (strain SL483).